Consider the following 458-residue polypeptide: Tissue-resident T-cell transcription regulator protein ZNF683 (458 aa).

Disordered stretches follow at residues 84–109 (PQDL…TDSE) and 249–275 (TLHS…APTR). C2H2-type zinc fingers lie at residues 301 to 323 (YECN…LRVH), 329 to 351 (FQCA…HLVH), and 357 to 379 (HQCQ…LRLH).

It belongs to the krueppel C2H2-type zinc-finger protein family. Expressed in tissue-resident memory T (Trm) cell population in non-lymphoid organs, such as skin and gut. Expressed in innate lymphocytes, including tissue-resident natural killer (trNK) and natural killer T (NKT) cells in thymus, spleen and liver.

It localises to the nucleus. Functionally, transcription factor that mediates a transcriptional program in various innate and adaptive immune tissue-resident lymphocyte T-cell types such as tissue-resident memory T (Trm), natural killer (trNK) and natural killer T (NKT) cells and negatively regulates gene expression of proteins that promote the egress of tissue-resident T-cell populations from non-lymphoid organs. Plays a role in the development, retention and long-term establishment of adaptive and innate tissue-resident lymphocyte T-cell types in non-lymphoid organs, such as the skin and gut, but also in other nonbarrier tissues like liver and kidney, and therefore may provide immediate immunological protection against reactivating infections or viral reinfection. Also plays a role in the differentiation of both thymic and peripheral NKT cells. Negatively regulates the accumulation of interferon-gamma (IFN-gamma) in NKT cells at steady state or after antigenic stimulation. Positively regulates granzyme B production in NKT cells after innate stimulation. Associates with the transcriptional repressor PRDM1/BLIMP1 to chromatin at gene promoter regions. In Mus musculus (Mouse), this protein is Tissue-resident T-cell transcription regulator protein ZNF683.